Reading from the N-terminus, the 585-residue chain is Protein NRT1/ PTR FAMILY 8.3 (585 aa).

An N-acetylglycine modification is found at glycine 2. A helical membrane pass occupies residues 91 to 111; the sequence is WQGTCYLTPLIGAVLADAYWG. Phosphothreonine is present on threonine 115. Transmembrane regions (helical) follow at residues 116–136, 154–174, 200–220, 228–248, 351–371, 387–407, 431–451, 472–492, 511–531, and 556–576; these read IACF…SASV, PAQY…TGGI, FFNW…SLLV, WGLG…SFFF, FPIW…STMF, LPPA…VPLY, MGIG…VEII, VLWQ…YFIG, ALAL…LTLV, and FFWL…FSAA.

The protein belongs to the major facilitator superfamily. Proton-dependent oligopeptide transporter (POT/PTR) (TC 2.A.17) family. As to expression, highly expressed in young leaves, roots and germinating seeds, intermediately in stems, flowers and mature leaves and at low level in siliques.

It localises to the vacuole membrane. Inhibited by leucyl-ethionine. Functionally, peptide transporter. Mediates the transport of di- and tripeptides. High affinity, low capacity transporter. Can also transport histidine. The chain is Protein NRT1/ PTR FAMILY 8.3 (NPF8.3) from Arabidopsis thaliana (Mouse-ear cress).